We begin with the raw amino-acid sequence, 2199 residues long: DNA polymerase epsilon catalytic subunit A (2199 aa).

Zn(2+)-binding residues include Cys2069, Cys2072, Cys2104, and Cys2107. The CysA-type zinc finger occupies 2069–2107; that stretch reads CKQCGVHQDFDLCLHEHLWPTRDDMGTLVFSDGWSCSSC. [4Fe-4S] cluster-binding residues include Cys2138, Cys2141, Cys2153, and Cys2155. A CysB motif motif is present at residues 2138–2155; that stretch reads CSKCKTVKQWSLKERCSC.

The protein belongs to the DNA polymerase type-B family. In terms of assembly, heterotetramer. Consists of 4 subunits: pol2, dpb2, dpb3 and dpb4. [4Fe-4S] cluster is required as a cofactor.

The protein localises to the nucleus. The enzyme catalyses DNA(n) + a 2'-deoxyribonucleoside 5'-triphosphate = DNA(n+1) + diphosphate. Its function is as follows. DNA polymerase II participates in chromosomal DNA replication. In Schizosaccharomyces pombe (strain 972 / ATCC 24843) (Fission yeast), this protein is DNA polymerase epsilon catalytic subunit A (pol2).